A 512-amino-acid chain; its full sequence is MSGSQDLNDSIRIYNEQLAQVEQALEGTSSGPERESLINLKSDLEELVKLTLETVQHENGDDLNAAASGSNEDDEFALFMREINALDDPGSVDAKPPKPDEVSVDEQEPFKDLVGSKCSAPHIHKWGSKSYHNALICSLDASDLDDVAAKVLFINPTHQEMVPCAYFLEGDCKFNDEMCRFSHGELISINELKEYREPRFELLRKKGCKVLAKNRNRIWSKGTIQTADFETKTCKIQMDEGRHEVELQFENVLPLEGDDVPSSDSESNSDSDEENEDDVVSLQQAQIIERSLLNPAPDQRLGDWEKHTKGIGSKIMLKMGYVVGAGLGSKGEGIVVPVSAQVLPQGRSLDYCMQLREQANGDKNLFSVEKKLQREKRIQEKRDAKNYAANKSKKDVFNFLNSEIFGSSNGSSSSSGSKKPAAKDNQMDLPSCSSKNLNIASLKLSEQMRRLELDIDRLSHSLTRHQPGSKMHSNLQKQIAEKRREISEIKKTEYSISREQQLRNDKRKMTVF.

The C3H1-type zinc finger occupies 159 to 186; that stretch reads QEMVPCAYFLEGDCKFNDEMCRFSHGEL. The segment at 255–280 is disordered; the sequence is LEGDDVPSSDSESNSDSDEENEDDVV. A compositionally biased stretch (acidic residues) spans 256 to 279; that stretch reads EGDDVPSSDSESNSDSDEENEDDV. The G-patch domain occupies 308 to 354; sequence TKGIGSKIMLKMGYVVGAGLGSKGEGIVVPVSAQVLPQGRSLDYCMQ. Low complexity predominate over residues 407–417; the sequence is SSNGSSSSSGS. The segment at 407 to 432 is disordered; sequence SSNGSSSSSGSKKPAAKDNQMDLPSC.

It is found in the nucleus. Its function is as follows. Transcription repressor. In Aedes aegypti (Yellowfever mosquito), this protein is Zinc finger CCCH-type with G patch domain-containing protein.